We begin with the raw amino-acid sequence, 241 residues long: 2-C-methyl-D-erythritol 4-phosphate cytidylyltransferase (241 aa).

It belongs to the IspD/TarI cytidylyltransferase family. IspD subfamily.

The enzyme catalyses 2-C-methyl-D-erythritol 4-phosphate + CTP + H(+) = 4-CDP-2-C-methyl-D-erythritol + diphosphate. It participates in isoprenoid biosynthesis; isopentenyl diphosphate biosynthesis via DXP pathway; isopentenyl diphosphate from 1-deoxy-D-xylulose 5-phosphate: step 2/6. In terms of biological role, catalyzes the formation of 4-diphosphocytidyl-2-C-methyl-D-erythritol from CTP and 2-C-methyl-D-erythritol 4-phosphate (MEP). This Pseudoalteromonas translucida (strain TAC 125) protein is 2-C-methyl-D-erythritol 4-phosphate cytidylyltransferase.